The primary structure comprises 1495 residues: ESX secretion system protein YukB (1495 aa).

Helical transmembrane passes span 246 to 266 (LWLVILPPLVMLIVMGVVAII) and 270 to 290 (GIFILVSLAMFMMTLITSTVQ). FtsK domains lie at 661–858 (KDDI…TDSK) and 993–1177 (QAPI…SEGY). ATP is bound by residues 682-689 (GTTGSGKS) and 1010-1017 (GSSGYGKS).

The protein belongs to the EssC family.

The protein resides in the cell membrane. Required for YukE secretion. Probable component or regulator of the ESX/ESAT-6-like secretion system (BsEss). The chain is ESX secretion system protein YukB (yukB) from Bacillus subtilis (strain 168).